A 207-amino-acid chain; its full sequence is Small ribosomal subunit protein uS10m (207 aa).

The transit peptide at 1-24 directs the protein to the mitochondrion; that stretch reads MLSVFGLRTVARCNSTLASGGARA.

Belongs to the universal ribosomal protein uS10 family. As to quaternary structure, part of the mitochondrial small ribosomal subunit.

It localises to the mitochondrion. Its function is as follows. Involved in mitochondrial genome encoded proteins translation. Involved in the binding of tRNA to the ribosomes. This Eremothecium gossypii (strain ATCC 10895 / CBS 109.51 / FGSC 9923 / NRRL Y-1056) (Yeast) protein is Small ribosomal subunit protein uS10m (RSM10).